The sequence spans 540 residues: L-aspartate oxidase (540 aa).

Residues 16–19 (SGAA), Lys-38, 45–52 (STFYAQGG), 161–162 (NA), and Asp-223 each bind FAD. Succinate contacts are provided by residues His-244 and 259-260 (TE). The active-site Proton donor/acceptor is the Arg-290. Residue Glu-375 coordinates FAD. Ser-389 is a succinate binding site. Residue 391 to 392 (SL) participates in FAD binding.

It belongs to the FAD-dependent oxidoreductase 2 family. NadB subfamily. Monomer. Homodimer. Both the monomeric and dimeric forms of the enzyme are catalytically active. Requires FAD as cofactor.

The protein localises to the cytoplasm. It catalyses the reaction L-aspartate + O2 = iminosuccinate + H2O2. The enzyme catalyses fumarate + L-aspartate = iminosuccinate + succinate. It participates in cofactor biosynthesis; NAD(+) biosynthesis; iminoaspartate from L-aspartate (oxidase route): step 1/1. Inhibited by the product iminoaspartate. Competitively inhibited by mesotartrate. NAD acts as a competitive inhibitor to FAD. Inhibited by iodoacetic acid, diethylpyrocarbonate and tetranitromethane. Catalyzes the oxidation of L-aspartate to iminoaspartate, the first step in the de novo biosynthesis of NAD(+). Can use either oxygen or fumarate as electron acceptors, which allows the enzyme to be functional under aerobic and anaerobic conditions. In vivo, fumarate is used under anaerobic conditions, and oxygen is the predominant electron acceptor under aerobic conditions due to the lower fumarate levels. In vitro, fumarate is a more efficient electron acceptor and is kinetically superior to oxygen. The sequence is that of L-aspartate oxidase from Escherichia coli (strain K12).